The primary structure comprises 206 residues: Large ribosomal subunit protein uL4 (206 aa).

Over residues 48-59 (THDTKTRSEVRG) the composition is skewed to basic and acidic residues. The disordered stretch occupies residues 48-77 (THDTKTRSEVRGGGRKPWRQKGTGRARHGS). Residues 60–77 (GGRKPWRQKGTGRARHGS) show a composition bias toward basic residues.

The protein belongs to the universal ribosomal protein uL4 family. Part of the 50S ribosomal subunit.

Functionally, one of the primary rRNA binding proteins, this protein initially binds near the 5'-end of the 23S rRNA. It is important during the early stages of 50S assembly. It makes multiple contacts with different domains of the 23S rRNA in the assembled 50S subunit and ribosome. Forms part of the polypeptide exit tunnel. In Pelotomaculum thermopropionicum (strain DSM 13744 / JCM 10971 / SI), this protein is Large ribosomal subunit protein uL4.